The primary structure comprises 258 residues: Small ribosomal subunit protein uS2 (258 aa).

The protein belongs to the universal ribosomal protein uS2 family.

This Leuconostoc mesenteroides subsp. mesenteroides (strain ATCC 8293 / DSM 20343 / BCRC 11652 / CCM 1803 / JCM 6124 / NCDO 523 / NBRC 100496 / NCIMB 8023 / NCTC 12954 / NRRL B-1118 / 37Y) protein is Small ribosomal subunit protein uS2.